The chain runs to 201 residues: B-cell CLL/lymphoma 7 protein family member A (201 aa).

A disordered region spans residues 46–201; that stretch reads YKWVPVTEPK…GKIDSSSEES (156 aa). The span at 54–71 shows a compositional bias: basic and acidic residues; that stretch reads PKSDDNKNKKKGKDDKYG. 3 stretches are compositionally biased toward polar residues: residues 73 to 83, 93 to 114, and 133 to 142; these read EVTTPENSSSP, SNQSSIADSSPLKQETSNNTSP, and QYPSKQPSSG. The span at 158 to 167 shows a compositional bias: basic and acidic residues; the sequence is TSKRDSKSQG. The segment covering 168 to 179 has biased composition (polar residues); it reads DSESFLDSSKSA. The segment covering 192–201 has biased composition (basic and acidic residues); it reads GKIDSSSEES.

It belongs to the BCL7 family.

This is B-cell CLL/lymphoma 7 protein family member A (bcl7a) from Danio rerio (Zebrafish).